A 638-amino-acid polypeptide reads, in one-letter code: ATP-dependent zinc metalloprotease FtsH (638 aa).

Residues 1–15 lie on the Cytoplasmic side of the membrane; it reads MDNNHKGPNDPNSKK. A helical transmembrane segment spans residues 16–36; sequence PLLQNPLLLIAIFGIIIFVAM. The Periplasmic portion of the chain corresponds to 37–122; it reads RVMNSDEGFG…INYSGFSESN (86 aa). The chain crosses the membrane as a helical span at residues 123–143; that stretch reads FFADILGWLLPVLVILGLWMF. The Cytoplasmic portion of the chain corresponds to 144–638; sequence MASRMQKNMG…RLVPLEEHAS (495 aa). 216 to 223 provides a ligand contact to ATP; the sequence is GPPGTGKT. Histidine 440 serves as a coordination point for Zn(2+). Residue glutamate 441 is part of the active site. Residues histidine 444 and aspartate 517 each coordinate Zn(2+).

This sequence in the central section; belongs to the AAA ATPase family. In the C-terminal section; belongs to the peptidase M41 family. Homohexamer. It depends on Zn(2+) as a cofactor.

It localises to the cell inner membrane. Acts as a processive, ATP-dependent zinc metallopeptidase for both cytoplasmic and membrane proteins. Plays a role in the quality control of integral membrane proteins. The polypeptide is ATP-dependent zinc metalloprotease FtsH (Helicobacter felis (strain ATCC 49179 / CCUG 28539 / NCTC 12436 / CS1)).